The sequence spans 166 residues: Phosphopantetheine adenylyltransferase (166 aa).

Position 9 (threonine 9) interacts with substrate. ATP contacts are provided by residues 9 to 10 (TF) and histidine 17. Residues lysine 41, leucine 78, and arginine 92 each contribute to the substrate site. ATP contacts are provided by residues 93–95 (GLR), glutamate 103, and 128–134 (HQAIASK).

Belongs to the bacterial CoaD family. In terms of assembly, homohexamer. Requires Mg(2+) as cofactor.

It is found in the cytoplasm. The catalysed reaction is (R)-4'-phosphopantetheine + ATP + H(+) = 3'-dephospho-CoA + diphosphate. Its pathway is cofactor biosynthesis; coenzyme A biosynthesis; CoA from (R)-pantothenate: step 4/5. Its function is as follows. Reversibly transfers an adenylyl group from ATP to 4'-phosphopantetheine, yielding dephospho-CoA (dPCoA) and pyrophosphate. This is Phosphopantetheine adenylyltransferase from Roseobacter denitrificans (strain ATCC 33942 / OCh 114) (Erythrobacter sp. (strain OCh 114)).